The primary structure comprises 212 residues: Cytidylate kinase (212 aa).

9 to 17 (GPAAAGKGT) provides a ligand contact to ATP.

The protein belongs to the cytidylate kinase family. Type 1 subfamily.

It localises to the cytoplasm. It catalyses the reaction CMP + ATP = CDP + ADP. The catalysed reaction is dCMP + ATP = dCDP + ADP. This chain is Cytidylate kinase, found in Sinorhizobium medicae (strain WSM419) (Ensifer medicae).